We begin with the raw amino-acid sequence, 288 residues long: Large ribosomal subunit protein uL2 (288 aa).

Residues 232-265 are disordered; sequence GTAMNPVDHPHGGGEGKTKGKHPESPWGWKTKGY. Basic and acidic residues predominate over residues 239 to 255; sequence DHPHGGGEGKTKGKHPE.

The protein belongs to the universal ribosomal protein uL2 family. In terms of assembly, part of the 50S ribosomal subunit. Forms a bridge to the 30S subunit in the 70S ribosome.

Functionally, one of the primary rRNA binding proteins. Required for association of the 30S and 50S subunits to form the 70S ribosome, for tRNA binding and peptide bond formation. It has been suggested to have peptidyltransferase activity; this is somewhat controversial. Makes several contacts with the 16S rRNA in the 70S ribosome. The chain is Large ribosomal subunit protein uL2 from Hydrogenobaculum sp. (strain Y04AAS1).